Here is a 254-residue protein sequence, read N- to C-terminus: L-rhamnose 1-dehydrogenase (NADP(+)) (254 aa).

6 residues coordinate NADP(+): glycine 13, serine 15, arginine 16, isoleucine 18, aspartate 64, and asparagine 91. The active-site Proton donor is serine 144. Beta-L-rhamnose contacts are provided by serine 144, serine 146, glutamine 154, and tyrosine 157. The NADP(+) site is built by tyrosine 157 and lysine 161. Tyrosine 157 (proton acceptor) is an active-site residue. Lysine 161 acts as the Lowers pKa of active site Tyr in catalysis. Threonine 189 is a beta-L-rhamnose binding site. Isoleucine 190 is a binding site for NADP(+). Asparagine 195 is a beta-L-rhamnose binding site.

It belongs to the short-chain dehydrogenases/reductases (SDR) family.

It catalyses the reaction L-rhamnofuranose + NADP(+) = L-rhamnono-1,4-lactone + NADPH + H(+). The protein operates within carbohydrate degradation; L-rhamnose degradation. Its function is as follows. Involved in the non-phosphorylated metabolic pathway of L-rhamnose catabolism. Catalyzes the oxidation of L-rhamnose to yield L-rhamnono-1,4-lactone. It can also oxidize L-lyxose and L-mannose, and uses only NADP. This Thermoplasma acidophilum (strain ATCC 25905 / DSM 1728 / JCM 9062 / NBRC 15155 / AMRC-C165) protein is L-rhamnose 1-dehydrogenase (NADP(+)).